Consider the following 334-residue polypeptide: Spermidine synthase 1 (334 aa).

The tract at residues methionine 1–asparagine 37 is disordered. Over residues valine 26–asparagine 37 the composition is skewed to polar residues. In terms of domain architecture, PABS spans proline 44–threonine 281. Glutamine 75 contacts S-adenosyl 3-(methylsulfanyl)propylamine. Residue tyrosine 105 participates in putrescine binding. Residues glutamine 106, aspartate 130, glutamate 150, aspartate 181–glycine 182, and aspartate 200 each bind S-adenosyl 3-(methylsulfanyl)propylamine. Residue aspartate 200 is the Proton acceptor of the active site. Putrescine contacts are provided by residues aspartate 200–aspartate 203 and tyrosine 269.

This sequence belongs to the spermidine/spermine synthase family.

The enzyme catalyses S-adenosyl 3-(methylsulfanyl)propylamine + putrescine = S-methyl-5'-thioadenosine + spermidine + H(+). The protein operates within amine and polyamine biosynthesis; spermidine biosynthesis; spermidine from putrescine: step 1/1. This chain is Spermidine synthase 1 (SPDSYN1), found in Pisum sativum (Garden pea).